Reading from the N-terminus, the 217-residue chain is Probable transaldolase (217 aa).

Residue Lys83 is the Schiff-base intermediate with substrate of the active site.

The protein belongs to the transaldolase family. Type 3B subfamily.

It localises to the cytoplasm. It catalyses the reaction D-sedoheptulose 7-phosphate + D-glyceraldehyde 3-phosphate = D-erythrose 4-phosphate + beta-D-fructose 6-phosphate. Its pathway is carbohydrate degradation; pentose phosphate pathway; D-glyceraldehyde 3-phosphate and beta-D-fructose 6-phosphate from D-ribose 5-phosphate and D-xylulose 5-phosphate (non-oxidative stage): step 2/3. Its function is as follows. Transaldolase is important for the balance of metabolites in the pentose-phosphate pathway. This chain is Probable transaldolase, found in Phenylobacterium zucineum (strain HLK1).